The following is a 441-amino-acid chain: Protein kinase C and casein kinase substrate in neurons protein 1 (441 aa).

2 positions are modified to phosphoserine: Ser-2 and Ser-76. One can recognise an F-BAR domain in the interval 10–280 (EEITDSFWEV…AIRGADAQED (271 aa)). A coiled-coil region spans residues 23 to 272 (KRTVKRIDDG…HVYRELEQAI (250 aa)). Thr-181 is modified (phosphothreonine). The segment at 297 to 380 (PQFEEWNPDL…ANGGANPFED (84 aa)) is disordered. Positions 311 to 321 (AKKEKQPKKAE) are enriched in basic and acidic residues. Over residues 324 to 355 (TLSNATGAVESTSQAGDRGSVSSYDRGQTYAT) the composition is skewed to polar residues. Phosphoserine is present on residues Ser-343, Ser-345, Ser-346, Ser-358, and Ser-362. Residues 382 to 441 (AKGVRVRALYDYDGQEQDELSFKAGDELTKLGEEDEQGWCRGRLDSGQLGLYPANYVEAI) form the SH3 domain. Tyr-391 carries the post-translational modification Phosphotyrosine. Phosphoserine occurs at positions 402 and 427.

This sequence belongs to the PACSIN family. Homodimer. May form heterooligomers with other PACSINs. Interacts with both COBL and DBNL. Identified in a complex composed of COBL, PACSIN1 and WASL. Interacts with EHD3. Interacts (via SH3 domain) with SYNJ1 and WASL. Interacts (via SH3 domain) with DNM1; the interaction is reduced by DNM1 phosphorylation. Interacts with DNM2 and DNM3. Interacts with MAPT. Interacts with EHD1. Interacts with TRPV4. Phosphorylated by casein kinase 2 (CK2) and protein kinase C (PKC). As to expression, highly expressed in brain. Detected in hippocampus and dorsal root ganglion neurons. Detected in rod photoreceptor terminals in the outer plexiform layer of the retina (at protein level). In CNS neurons, high levels in the pyramidal cells of the hippocampus, Purkinje cells of the cerebellum and large neurons of the cortex and brain stem.

The protein localises to the cytoplasm. It localises to the cell projection. Its subcellular location is the synapse. The protein resides in the synaptosome. It is found in the ruffle membrane. The protein localises to the membrane. It localises to the cytoplasmic vesicle membrane. Its subcellular location is the cytosol. The protein resides in the cell membrane. In terms of biological role, binds to membranes via its F-BAR domain and mediates membrane tubulation. Plays a role in the reorganization of the microtubule cytoskeleton via its interaction with MAPT; this decreases microtubule stability and inhibits MAPT-induced microtubule polymerization. Plays a role in cellular transport processes by recruiting DNM1, DNM2 and DNM3 to membranes. Plays a role in the reorganization of the actin cytoskeleton and in neuron morphogenesis via its interaction with COBL and WASL, and by recruiting COBL to the cell cortex. Plays a role in the regulation of neurite formation, neurite branching and the regulation of neurite length. Required for normal synaptic vesicle endocytosis; this process retrieves previously released neurotransmitters to accommodate multiple cycles of neurotransmission. Required for normal excitatory and inhibitory synaptic transmission. This chain is Protein kinase C and casein kinase substrate in neurons protein 1 (Pacsin1), found in Mus musculus (Mouse).